Here is a 508-residue protein sequence, read N- to C-terminus: Light-independent protochlorophyllide reductase subunit B (508 aa).

Asp-36 is a [4Fe-4S] cluster binding site. The active-site Proton donor is Asp-294. 429–430 lines the substrate pocket; the sequence is GM.

It belongs to the ChlB/BchB/BchZ family. As to quaternary structure, protochlorophyllide reductase is composed of three subunits; ChlL, ChlN and ChlB. Forms a heterotetramer of two ChlB and two ChlN subunits. [4Fe-4S] cluster is required as a cofactor.

The enzyme catalyses chlorophyllide a + oxidized 2[4Fe-4S]-[ferredoxin] + 2 ADP + 2 phosphate = protochlorophyllide a + reduced 2[4Fe-4S]-[ferredoxin] + 2 ATP + 2 H2O. It participates in porphyrin-containing compound metabolism; chlorophyll biosynthesis (light-independent). Its function is as follows. Component of the dark-operative protochlorophyllide reductase (DPOR) that uses Mg-ATP and reduced ferredoxin to reduce ring D of protochlorophyllide (Pchlide) to form chlorophyllide a (Chlide). This reaction is light-independent. The NB-protein (ChlN-ChlB) is the catalytic component of the complex. The protein is Light-independent protochlorophyllide reductase subunit B of Acaryochloris marina (strain MBIC 11017).